The following is a 542-amino-acid chain: Cryptochrome-1 (542 aa).

One can recognise a Photolyase/cryptochrome alpha/beta domain in the interval 5–140; the sequence is GANVIWFRHG…DFVEKVSHTL (136 aa). Residues arginine 237, serine 265, serine 267, glutamine 311, histidine 378, 410–412, cysteine 416, and asparagine 419 contribute to the FAD site; that span reads DAD.

Belongs to the DNA photolyase class-1 family. As to quaternary structure, interacts with tim and per; promoted by light conditions. Interaction with tim irreversibly commits tim to proteasomal degradation. Interacts with l(1)G0136/CG8198. FAD is required as a cofactor. As to expression, expressed at higher levels in the head than in body and it is more expressed in antennae than in legs, wings and mouth appendages. Prominent expression is seen in cells of the lateral brain, which are close to or coincident with the clock neurons. Abundance oscillates in a circadian manner.

Its subcellular location is the cytoplasm. It is found in the perinuclear region. The protein localises to the nucleus. Blue light-dependent regulator that is the input of the circadian feedback loop. Has no photolyase activity for cyclobutane pyrimidine dimers or 6-4 photoproducts. Regulation of expression by light suggests a role in photoreception for locomotor activity rhythms. Functions, together with per, as a transcriptional repressor required for the oscillation of peripheral circadian clocks and for the correct specification of clock cells. Genes directly activated by the transcription factors Clock (Clk) and cycle (cyc) are repressed by cry. Necessary for light-dependent magnetosensitivity, an intact circadian system is not required for the magnetoreception mechanism to operate. Required for both the naive and trained responses to magnetic field, consistent with the notion that cry is in the input pathway of magnetic sensing. This is Cryptochrome-1 from Drosophila melanogaster (Fruit fly).